The following is a 2512-amino-acid chain: Fatty acid synthase (2512 aa).

Glutamate 2 carries the N-acetylglutamate modification. Residues 2-406 (EDVVIAGIAG…GSNAHVILRP (405 aa)) enclose the Ketosynthase family 3 (KS3) domain. Active-site for beta-ketoacyl synthase activity residues include cysteine 161, histidine 293, and histidine 331. Positions 427–815 (GRTQEAVEIL…GINVLGNNLF (389 aa)) are acyl and malonyl transferases. Residue serine 580 is the For acyl/malonyl transferase activity of the active site. An acyl-CoA is bound by residues 646–647 (DT), phenylalanine 670, and arginine 772. Positions 844-967 (PKAEDFPSGS…ISLLENDALK (124 aa)) are N-terminal hotdog fold. Residues 844–1111 (PKAEDFPSGS…ASVAPRRQQE (268 aa)) enclose the PKS/mFAS DH domain. Catalysis depends on histidine 878, which acts as the Proton acceptor; for dehydratase activity. Residues 984–1111 (AKSGLLMEDV…ASVAPRRQQE (128 aa)) are C-terminal hotdog fold. Residue aspartate 1034 is the Proton donor; for dehydratase activity of the active site. Cysteine 1475 is subject to S-nitrosocysteine. Residues 1638–1866 (WEVPENWTLE…MIKIQEEEKQ (229 aa)) form an enoyl reductase region. NADP(+) is bound at residue 1675–1692 (VLIHSGSGGVGQAAIAIA). Position 1708 is an N6-(pyridoxal phosphate)lysine (lysine 1708). The segment at 1867 to 2119 (YPLRSEPVKL…SFVLAEKVSV (253 aa)) is beta-ketoacyl reductase. 1889-1904 (SYIITGGLGGFGLELA) is an NADP(+) binding site. Position 2093 is an S-nitrosocysteine (cysteine 2093). Positions 2120–2200 (KSEGGSQRDL…ELSSKTGTAE (81 aa)) constitute a Carrier domain. An O-(pantetheine 4'-phosphoryl)serine modification is found at serine 2158. A thioesterase region spans residues 2209 to 2511 (KTGPGEPPKL…LAEPRVSVRE (303 aa)). Residues serine 2309 and histidine 2482 each act as for thioesterase activity in the active site.

Homodimer which is arranged in a head to tail fashion. In terms of processing, S-nitrosylation of Fatty acid synthase at cysteine residues Cys-1475 or Cys-2093 is important for the enzyme dimerization. In adipocytes, S-nitrosylation of Fatty acid synthase occurs under physiological conditions and gradually increases during adipogenesis.

It carries out the reaction acetyl-CoA + n malonyl-CoA + 2n NADPH + 2n H(+) = a long-chain fatty acid + (n+1) CoA + n CO2 + 2n NADP(+).. The catalysed reaction is holo-[ACP] + acetyl-CoA = acetyl-[ACP] + CoA. The enzyme catalyses holo-[ACP] + malonyl-CoA = malonyl-[ACP] + CoA. It catalyses the reaction a fatty acyl-[ACP] + malonyl-[ACP] + H(+) = a 3-oxoacyl-[ACP] + holo-[ACP] + CO2. It carries out the reaction a (3R)-hydroxyacyl-[ACP] + NADP(+) = a 3-oxoacyl-[ACP] + NADPH + H(+). The catalysed reaction is a (3R)-hydroxyacyl-[ACP] = a (2E)-enoyl-[ACP] + H2O. The enzyme catalyses a 2,3-saturated acyl-[ACP] + NADP(+) = a (2E)-enoyl-[ACP] + NADPH + H(+). It catalyses the reaction hexadecanoyl-[ACP] + H2O = hexadecanoate + holo-[ACP] + H(+). It carries out the reaction acetyl-[ACP] + malonyl-[ACP] + H(+) = 3-oxobutanoyl-[ACP] + holo-[ACP] + CO2. The catalysed reaction is 3-oxobutanoyl-[ACP] + NADPH + H(+) = (3R)-hydroxybutanoyl-[ACP] + NADP(+). The enzyme catalyses (3R)-hydroxybutanoyl-[ACP] = (2E)-butenoyl-[ACP] + H2O. It catalyses the reaction (2E)-butenoyl-[ACP] + NADPH + H(+) = butanoyl-[ACP] + NADP(+). It carries out the reaction butanoyl-[ACP] + malonyl-[ACP] + H(+) = 3-oxohexanoyl-[ACP] + holo-[ACP] + CO2. The catalysed reaction is 3-oxohexanoyl-[ACP] + NADPH + H(+) = (3R)-hydroxyhexanoyl-[ACP] + NADP(+). The enzyme catalyses (3R)-hydroxyhexanoyl-[ACP] = (2E)-hexenoyl-[ACP] + H2O. It catalyses the reaction (2E)-hexenoyl-[ACP] + NADPH + H(+) = hexanoyl-[ACP] + NADP(+). It carries out the reaction hexanoyl-[ACP] + malonyl-[ACP] + H(+) = 3-oxooctanoyl-[ACP] + holo-[ACP] + CO2. The catalysed reaction is 3-oxooctanoyl-[ACP] + NADPH + H(+) = (3R)-hydroxyoctanoyl-[ACP] + NADP(+). The enzyme catalyses (3R)-hydroxyoctanoyl-[ACP] = (2E)-octenoyl-[ACP] + H2O. It catalyses the reaction (2E)-octenoyl-[ACP] + NADPH + H(+) = octanoyl-[ACP] + NADP(+). It carries out the reaction octanoyl-[ACP] + malonyl-[ACP] + H(+) = 3-oxodecanoyl-[ACP] + holo-[ACP] + CO2. The catalysed reaction is 3-oxodecanoyl-[ACP] + NADPH + H(+) = (3R)-hydroxydecanoyl-[ACP] + NADP(+). The enzyme catalyses (3R)-hydroxydecanoyl-[ACP] = (2E)-decenoyl-[ACP] + H2O. It catalyses the reaction (2E)-decenoyl-[ACP] + NADPH + H(+) = decanoyl-[ACP] + NADP(+). It carries out the reaction decanoyl-[ACP] + malonyl-[ACP] + H(+) = 3-oxododecanoyl-[ACP] + holo-[ACP] + CO2. The catalysed reaction is 3-oxododecanoyl-[ACP] + NADPH + H(+) = (3R)-hydroxydodecanoyl-[ACP] + NADP(+). The enzyme catalyses (3R)-hydroxydodecanoyl-[ACP] = (2E)-dodecenoyl-[ACP] + H2O. It catalyses the reaction (2E)-dodecenoyl-[ACP] + NADPH + H(+) = dodecanoyl-[ACP] + NADP(+). It carries out the reaction dodecanoyl-[ACP] + malonyl-[ACP] + H(+) = 3-oxotetradecanoyl-[ACP] + holo-[ACP] + CO2. The catalysed reaction is 3-oxotetradecanoyl-[ACP] + NADPH + H(+) = (3R)-hydroxytetradecanoyl-[ACP] + NADP(+). The enzyme catalyses (3R)-hydroxytetradecanoyl-[ACP] = (2E)-tetradecenoyl-[ACP] + H2O. It catalyses the reaction (2E)-tetradecenoyl-[ACP] + NADPH + H(+) = tetradecanoyl-[ACP] + NADP(+). It carries out the reaction tetradecanoyl-[ACP] + malonyl-[ACP] + H(+) = 3-oxohexadecanoyl-[ACP] + holo-[ACP] + CO2. The catalysed reaction is 3-oxohexadecanoyl-[ACP] + NADPH + H(+) = (3R)-hydroxyhexadecanoyl-[ACP] + NADP(+). The enzyme catalyses (3R)-hydroxyhexadecanoyl-[ACP] = (2E)-hexadecenoyl-[ACP] + H2O. It catalyses the reaction (2E)-hexadecenoyl-[ACP] + NADPH + H(+) = hexadecanoyl-[ACP] + NADP(+). It carries out the reaction hexadecanoyl-[ACP] + malonyl-[ACP] + H(+) = 3-oxooctadecanoyl-[ACP] + holo-[ACP] + CO2. The catalysed reaction is 3-oxooctadecanoyl-[ACP] + NADPH + H(+) = (3R)-hydroxyoctadecanoyl-[ACP] + NADP(+). The enzyme catalyses (3R)-hydroxyoctadecanoyl-[ACP] = (2E)-octadecenoyl-[ACP] + H2O. It catalyses the reaction (2E)-octadecenoyl-[ACP] + NADPH + H(+) = octadecanoyl-[ACP] + NADP(+). It carries out the reaction tetradecanoyl-[ACP] + H2O = tetradecanoate + holo-[ACP] + H(+). The catalysed reaction is octadecanoyl-[ACP] + H2O = octadecanoate + holo-[ACP] + H(+). Its pathway is lipid metabolism; fatty acid biosynthesis. Its activity is regulated as follows. Cerulenin, a potent non-competitive pharmacological inhibitor of FAS, binds covalently to the active site of the condensing enzyme region, inactivating a key enzyme step in fatty acid synthesis. Its function is as follows. Fatty acid synthetase is a multifunctional enzyme that catalyzes the de novo biosynthesis of long-chain saturated fatty acids starting from acetyl-CoA and malonyl-CoA in the presence of NADPH. This multifunctional protein contains 7 catalytic activities and a site for the binding of the prosthetic group 4'-phosphopantetheine of the acyl carrier protein ([ACP]) domain. In Gallus gallus (Chicken), this protein is Fatty acid synthase (FASN).